We begin with the raw amino-acid sequence, 104 residues long: L-rhamnose mutarotase (104 aa).

Tyrosine 18 provides a ligand contact to substrate. The active-site Proton donor is histidine 22. Substrate contacts are provided by residues tyrosine 41 and 76 to 77 (WW).

It belongs to the rhamnose mutarotase family. In terms of assembly, homodimer.

Its subcellular location is the cytoplasm. It carries out the reaction alpha-L-rhamnose = beta-L-rhamnose. The protein operates within carbohydrate metabolism; L-rhamnose metabolism. In terms of biological role, involved in the anomeric conversion of L-rhamnose. In Bacteroides thetaiotaomicron (strain ATCC 29148 / DSM 2079 / JCM 5827 / CCUG 10774 / NCTC 10582 / VPI-5482 / E50), this protein is L-rhamnose mutarotase.